The chain runs to 143 residues: Nucleoside diphosphate kinase (143 aa).

Lys11, Phe59, Arg87, Thr93, Arg104, and Asn114 together coordinate ATP. The active-site Pros-phosphohistidine intermediate is His117.

This sequence belongs to the NDK family. Homotetramer. Mg(2+) serves as cofactor.

The protein localises to the cytoplasm. The catalysed reaction is a 2'-deoxyribonucleoside 5'-diphosphate + ATP = a 2'-deoxyribonucleoside 5'-triphosphate + ADP. The enzyme catalyses a ribonucleoside 5'-diphosphate + ATP = a ribonucleoside 5'-triphosphate + ADP. In terms of biological role, major role in the synthesis of nucleoside triphosphates other than ATP. The ATP gamma phosphate is transferred to the NDP beta phosphate via a ping-pong mechanism, using a phosphorylated active-site intermediate. The chain is Nucleoside diphosphate kinase from Shewanella piezotolerans (strain WP3 / JCM 13877).